A 390-amino-acid chain; its full sequence is Phosphopentomutase (390 aa).

Mn(2+)-binding residues include Asp12, Asp285, His290, Asp326, His327, and His338.

The protein belongs to the phosphopentomutase family. It depends on Mn(2+) as a cofactor.

It is found in the cytoplasm. The catalysed reaction is 2-deoxy-alpha-D-ribose 1-phosphate = 2-deoxy-D-ribose 5-phosphate. The enzyme catalyses alpha-D-ribose 1-phosphate = D-ribose 5-phosphate. The protein operates within carbohydrate degradation; 2-deoxy-D-ribose 1-phosphate degradation; D-glyceraldehyde 3-phosphate and acetaldehyde from 2-deoxy-alpha-D-ribose 1-phosphate: step 1/2. In terms of biological role, isomerase that catalyzes the conversion of deoxy-ribose 1-phosphate (dRib-1-P) and ribose 1-phosphate (Rib-1-P) to deoxy-ribose 5-phosphate (dRib-5-P) and ribose 5-phosphate (Rib-5-P), respectively. The chain is Phosphopentomutase from Brevibacillus brevis (strain 47 / JCM 6285 / NBRC 100599).